Reading from the N-terminus, the 171-residue chain is Nucleoside-triphosphatase THEP1 (171 aa).

ATP is bound by residues Gly-8–Ser-15 and Val-95–Gly-102.

This sequence belongs to the THEP1 NTPase family.

It carries out the reaction a ribonucleoside 5'-triphosphate + H2O = a ribonucleoside 5'-diphosphate + phosphate + H(+). Its function is as follows. Has nucleotide phosphatase activity towards ATP, GTP, CTP, TTP and UTP. May hydrolyze nucleoside diphosphates with lower efficiency. The polypeptide is Nucleoside-triphosphatase THEP1 (Ignicoccus hospitalis (strain KIN4/I / DSM 18386 / JCM 14125)).